A 3351-amino-acid polypeptide reads, in one-letter code: Apolipophorins (3351 aa).

Residues 1 to 25 (MARMKYNIALIGILASVLLTIAVNA) form the signal peptide. The 599-residue stretch at 43 to 641 (YIPGNYYDYS…SQHGFLPRSS (599 aa)) folds into the Vitellogenin domain. Asn-67, Asn-644, Asn-1514, Asn-1744, Asn-1932, Asn-1979, and Asn-2822 each carry an N-linked (GlcNAc...) asparagine glycan. The VWFD domain maps to 2786 to 2952 (LRGHVVDGKH…DYGVGKCTAI (167 aa)).

Interacts with Nrx-1 (via cytoplasmic domain); the interaction supports apolpp/ApoLI protein stability. In terms of processing, may be modified covalently by lipidation. Cleaved into 2 chains by furin protease. However, prevention of cleavage does not impair its function. During stage 12, it is highly present throughout the yolk sac. By late stage 14, it localizes in the lateral fat body cells. Starting at stage 14, it localizes to the apodemes. Component of hemolymph clots (at protein level). Expressed in the amniosera. Expressed in rhabdomere of photoreceptor cells in retina (at protein level). In terms of tissue distribution, expressed in rhabdomere of photoreceptor cells in retina (at protein level). As to expression, expressed in simper cells as well as interphotoreceptor matrix (at protein level).

The protein localises to the secreted. Its subcellular location is the cell projection. It is found in the rhabdomere. In terms of biological role, constitutes the major component of lipophorin, which mediates transport for various types of lipids in hemolymph. Acts by forming lipoprotein particles that bind lipoproteins and lipids. Also involved in the transport of hydrophobic ligands like juvenile hormones, pheromone hydrocarbons and carotenoids. Required for morphogens wingless (wg) and hedgehog (hh) function, probably by acting as vehicles for the movement of wg and hh, explaining how covalently lipidated wg and hh can spread over long distances. May also be involved in transport and/or metabolism of heme. Involved in yolk granule formation. May be a component of yolk incorporated into yolk granules via yl/yolkless-mediated endocytosis and the endolysosomal pathway. This is Apolipophorins from Drosophila melanogaster (Fruit fly).